A 493-amino-acid chain; its full sequence is Calcium-binding tyrosine phosphorylation-regulated protein (493 aa).

In terms of domain architecture, RIIa spans 12 to 49 (YGLKTLLEGISRAVLKTNPSNINQFAAAYFQELTMYRG). Disordered regions lie at residues 85–164 (EPGK…VSPE), 244–271 (DLGS…QEPP), 330–354 (NEQS…TTSG), and 426–493 (IVSD…STAE). Over residues 90–100 (SVESKVPTQME) the composition is skewed to polar residues. Positions 101–117 (KSTDTDEDNVTRTEYSD) are enriched in basic and acidic residues. The segment covering 141–152 (SSKPATPKTTTP) has biased composition (low complexity). Residue T151 is modified to Phosphothreonine. Residue S155 is modified to Phosphoserine. Polar residues-rich tracts occupy residues 426-442 (IVSD…NSVP) and 461-470 (SGTSVKSSSG). A compositionally biased stretch (acidic residues) spans 484 to 493 (IEPEGESTAE).

As to quaternary structure, interacts with FSCB. Isoform 3 self-associates. Isoform 3 and isoform 5 interact with GSK3B. Isoform 1 does not interact with GSK3B. Post-translationally, isoform 1 is phosphorylated on tyrosine residues during in vitro capacitation. Isoform 3 and isoform 5 are phosphorylated by GSK3B in vitro. Dephosphorylation affects its ability to bind calcium. Expressed in elongating spermatids and spermatozoa (at protein level). Isoform 1 is expressed in testis. Isoform 3 and isoform 5 are also expressed in brain, pancreas and numerous brain tumors.

Its subcellular location is the cytoplasm. It is found in the cytoskeleton. The protein localises to the cell projection. The protein resides in the cilium. It localises to the flagellum. Its subcellular location is the nucleus. Its function is as follows. May function as a regulator of both motility- and head-associated functions such as capacitation and the acrosome reaction. Isoform 1 binds calcium in vitro. Isoform 2 and isoform 6 probably bind calcium. Isoform 3 and isoform 5 do not bind calcium in vitro. Isoform 4 probably does not bind calcium. This chain is Calcium-binding tyrosine phosphorylation-regulated protein (CABYR), found in Homo sapiens (Human).